A 394-amino-acid polypeptide reads, in one-letter code: Exodeoxyribonuclease 7 large subunit (394 aa).

The protein belongs to the XseA family. Heterooligomer composed of large and small subunits.

The protein resides in the cytoplasm. It catalyses the reaction Exonucleolytic cleavage in either 5'- to 3'- or 3'- to 5'-direction to yield nucleoside 5'-phosphates.. Its function is as follows. Bidirectionally degrades single-stranded DNA into large acid-insoluble oligonucleotides, which are then degraded further into small acid-soluble oligonucleotides. In Thermotoga sp. (strain RQ2), this protein is Exodeoxyribonuclease 7 large subunit.